The sequence spans 291 residues: Protease HtpX (291 aa).

The next 2 membrane-spanning stretches (helical) occupy residues 4-24 (IALFLATNLAVMIVFSIVLNI) and 36-56 (LSGLLVMAVLFGFGGSLVSLL). Residue His143 participates in Zn(2+) binding. Glu144 is an active-site residue. His147 lines the Zn(2+) pocket. The next 2 helical transmembrane spans lie at 151–171 (GDMITMTLMQGVVNTFVIFLS) and 199–219 (FIVSTVLEIAFGFLASFLTMW). Zn(2+) is bound at residue Glu225.

It belongs to the peptidase M48B family. The cofactor is Zn(2+).

The protein localises to the cell inner membrane. The chain is Protease HtpX from Aliivibrio salmonicida (strain LFI1238) (Vibrio salmonicida (strain LFI1238)).